The primary structure comprises 557 residues: Formate--tetrahydrofolate ligase (557 aa).

67–74 (TPAGEGKT) contributes to the ATP binding site.

This sequence belongs to the formate--tetrahydrofolate ligase family.

The catalysed reaction is (6S)-5,6,7,8-tetrahydrofolate + formate + ATP = (6R)-10-formyltetrahydrofolate + ADP + phosphate. The protein operates within one-carbon metabolism; tetrahydrofolate interconversion. This Cereibacter sphaeroides (strain ATCC 17025 / ATH 2.4.3) (Rhodobacter sphaeroides) protein is Formate--tetrahydrofolate ligase.